The primary structure comprises 419 residues: Acetyl transferase GW6a (419 aa).

Positions 12-210 (VRVREFDVEK…GHPVHAHRLP (199 aa)) constitute an N-acetyltransferase domain. Positions 44-68 (VHDHADDGDGAAAKEKKKTKTKTKK) are disordered. Positions 58–68 (EKKKTKTKTKK) are enriched in basic residues.

Belongs to the acetyltransferase family. Interacts (via C-terminus) with HDR3 (via N-terminus). Post-translationally, ubiquitinated at Lys-63 by HDR3. Polyubiquitination of GW6A delays its degradation by the 26S proteasome and enhances GW6A histone acetyltransferase activity. As to expression, expressed in roots, leaf blades, leaf sheaths, shoot apical meristem and young panicles.

It is found in the nucleus. In terms of biological role, possesses intrinsic histone acetyltransferase activity and acts as a positive regulator of grain weight, hull size, yield, and plant biomass. Regulates postitively grain weight and yield by enlarging spikelet hulls via increasing cell number and accelerating grain filling. In vitro, catalyzes the acetylation of histone H4 at Lys-6 (H4K5ac), Lys-13 (H4K12ac) and Lys-17 (H4K16ac). Involved in the regulation of plastochron (the time interval between leaf initiation event). This chain is Acetyl transferase GW6a, found in Oryza sativa subsp. japonica (Rice).